The chain runs to 129 residues: Aspartate 1-decarboxylase (129 aa).

Ser-25 (schiff-base intermediate with substrate; via pyruvic acid) is an active-site residue. Ser-25 is subject to Pyruvic acid (Ser). Position 57 (Thr-57) interacts with substrate. Tyr-58 functions as the Proton donor in the catalytic mechanism. 73–75 (GAA) serves as a coordination point for substrate.

This sequence belongs to the PanD family. As to quaternary structure, heterooctamer of four alpha and four beta subunits. Pyruvate serves as cofactor. Post-translationally, is synthesized initially as an inactive proenzyme, which is activated by self-cleavage at a specific serine bond to produce a beta-subunit with a hydroxyl group at its C-terminus and an alpha-subunit with a pyruvoyl group at its N-terminus.

It is found in the cytoplasm. It catalyses the reaction L-aspartate + H(+) = beta-alanine + CO2. It functions in the pathway cofactor biosynthesis; (R)-pantothenate biosynthesis; beta-alanine from L-aspartate: step 1/1. Functionally, catalyzes the pyruvoyl-dependent decarboxylation of aspartate to produce beta-alanine. This Chlorobium chlorochromatii (strain CaD3) protein is Aspartate 1-decarboxylase.